The following is a 454-amino-acid chain: Bifunctional protein GlmU (454 aa).

The tract at residues 1-227 is pyrophosphorylase; that stretch reads MKKLSVVILA…KMEVEGANNR (227 aa). UDP-N-acetyl-alpha-D-glucosamine contacts are provided by residues 9–12, K23, Q74, 79–80, 101–103, G138, E152, N167, and N225; these read LAAG, GT, and YGD. D103 is a Mg(2+) binding site. N225 provides a ligand contact to Mg(2+). The segment at 228-248 is linker; that stretch reads LQLAALERYYQHKQAERLLLE. The N-acetyltransferase stretch occupies residues 249 to 454; it reads GVMLIDPARF…AGWQRPTKKK (206 aa). R331 and K349 together coordinate UDP-N-acetyl-alpha-D-glucosamine. The Proton acceptor role is filled by H361. UDP-N-acetyl-alpha-D-glucosamine contacts are provided by Y364 and N375. Residues A378, 384 to 385, S403, A421, and R438 contribute to the acetyl-CoA site; that span reads NY.

It in the N-terminal section; belongs to the N-acetylglucosamine-1-phosphate uridyltransferase family. In the C-terminal section; belongs to the transferase hexapeptide repeat family. As to quaternary structure, homotrimer. Mg(2+) serves as cofactor.

Its subcellular location is the cytoplasm. The enzyme catalyses alpha-D-glucosamine 1-phosphate + acetyl-CoA = N-acetyl-alpha-D-glucosamine 1-phosphate + CoA + H(+). The catalysed reaction is N-acetyl-alpha-D-glucosamine 1-phosphate + UTP + H(+) = UDP-N-acetyl-alpha-D-glucosamine + diphosphate. It functions in the pathway nucleotide-sugar biosynthesis; UDP-N-acetyl-alpha-D-glucosamine biosynthesis; N-acetyl-alpha-D-glucosamine 1-phosphate from alpha-D-glucosamine 6-phosphate (route II): step 2/2. The protein operates within nucleotide-sugar biosynthesis; UDP-N-acetyl-alpha-D-glucosamine biosynthesis; UDP-N-acetyl-alpha-D-glucosamine from N-acetyl-alpha-D-glucosamine 1-phosphate: step 1/1. Its pathway is bacterial outer membrane biogenesis; LPS lipid A biosynthesis. Its function is as follows. Catalyzes the last two sequential reactions in the de novo biosynthetic pathway for UDP-N-acetylglucosamine (UDP-GlcNAc). The C-terminal domain catalyzes the transfer of acetyl group from acetyl coenzyme A to glucosamine-1-phosphate (GlcN-1-P) to produce N-acetylglucosamine-1-phosphate (GlcNAc-1-P), which is converted into UDP-GlcNAc by the transfer of uridine 5-monophosphate (from uridine 5-triphosphate), a reaction catalyzed by the N-terminal domain. In Mannheimia succiniciproducens (strain KCTC 0769BP / MBEL55E), this protein is Bifunctional protein GlmU.